Consider the following 97-residue polypeptide: MEARHMLVTILLLSFVFMNIMKVEAQKVIGYPAIGRDGARGCSPKDPSCPQQPEKPYKRGCEKITRCERDRRKQAHLRNPRKVLDVVAVMAKAKQLY.

The signal sequence occupies residues 1-25 (MEARHMLVTILLLSFVFMNIMKVEA). Disulfide bonds link cysteine 42/cysteine 49 and cysteine 61/cysteine 67.

Belongs to the plant rapid alkalinization factor (RALF) family.

The protein localises to the secreted. Functionally, cell signaling peptide that may regulate plant stress, growth, and development. Mediates a rapid alkalinization of extracellular space by mediating a transient increase in the cytoplasmic Ca(2+) concentration leading to a calcium-dependent signaling events through a cell surface receptor and a concomitant activation of some intracellular mitogen-activated protein kinases. The protein is Protein RALF-like 2 (RALFL2) of Arabidopsis thaliana (Mouse-ear cress).